An 879-amino-acid chain; its full sequence is Valine--tRNA ligase (879 aa).

Residues 45–55 (PNVTGKLHLGH) carry the 'HIGH' region motif. The 'KMSKS' region motif lies at 521–525 (KMSKS). Residue K524 coordinates ATP. Residues 806–879 (LTELVNVDEE…ERIQDLKESK (74 aa)) adopt a coiled-coil conformation.

It belongs to the class-I aminoacyl-tRNA synthetase family. ValS type 1 subfamily. In terms of assembly, monomer.

Its subcellular location is the cytoplasm. It carries out the reaction tRNA(Val) + L-valine + ATP = L-valyl-tRNA(Val) + AMP + diphosphate. In terms of biological role, catalyzes the attachment of valine to tRNA(Val). As ValRS can inadvertently accommodate and process structurally similar amino acids such as threonine, to avoid such errors, it has a 'posttransfer' editing activity that hydrolyzes mischarged Thr-tRNA(Val) in a tRNA-dependent manner. This is Valine--tRNA ligase from Lactobacillus acidophilus (strain ATCC 700396 / NCK56 / N2 / NCFM).